We begin with the raw amino-acid sequence, 126 residues long: Large ribosomal subunit protein mL52 (126 aa).

The transit peptide at 1-28 directs the protein to the mitochondrion; it reads MLKITKICLASSATSTAQRSIALTAPRA.

It belongs to the mitochondrion-specific ribosomal protein mL52 family. Component of the mitochondrial ribosome large subunit (39S) which comprises a 16S rRNA and about 50 distinct proteins.

The protein resides in the mitochondrion. This chain is Large ribosomal subunit protein mL52 (mRpL52), found in Drosophila melanogaster (Fruit fly).